We begin with the raw amino-acid sequence, 26 residues long: IVGGDECNINEHRFLVALYDPDGFFC.

This sequence belongs to the peptidase S1 family. Snake venom subfamily. As to expression, expressed by the venom gland.

Its subcellular location is the secreted. In terms of biological role, thrombin-like snake venom serine protease that cleaves alpha-chain of fibrinogen (FGA) releases only fibrinopeptide A. Shows coagulant, esterase and amidase activities. The chain is Thrombin-like enzyme LmrSP-3 from Lachesis muta rhombeata (Bushmaster).